Consider the following 168-residue polypeptide: Protein-export protein SecB (168 aa).

This sequence belongs to the SecB family. In terms of assembly, homotetramer, a dimer of dimers. One homotetramer interacts with 1 SecA dimer.

The protein localises to the cytoplasm. Functionally, one of the proteins required for the normal export of preproteins out of the cell cytoplasm. It is a molecular chaperone that binds to a subset of precursor proteins, maintaining them in a translocation-competent state. It also specifically binds to its receptor SecA. The chain is Protein-export protein SecB from Rhizobium meliloti (strain 1021) (Ensifer meliloti).